A 598-amino-acid polypeptide reads, in one-letter code: Aspartate--tRNA ligase (598 aa).

Glu-173 contributes to the L-aspartate binding site. The interval 197 to 200 (QLFK) is aspartate. An L-aspartate-binding site is contributed by Arg-219. Residues 219-221 (RDE) and Gln-228 each bind ATP. An L-aspartate-binding site is contributed by His-449. Glu-483 is an ATP binding site. Arg-490 serves as a coordination point for L-aspartate. 535–538 (GLDR) is a binding site for ATP.

This sequence belongs to the class-II aminoacyl-tRNA synthetase family. Type 1 subfamily. In terms of assembly, homodimer.

Its subcellular location is the cytoplasm. The catalysed reaction is tRNA(Asp) + L-aspartate + ATP = L-aspartyl-tRNA(Asp) + AMP + diphosphate. Functionally, catalyzes the attachment of L-aspartate to tRNA(Asp) in a two-step reaction: L-aspartate is first activated by ATP to form Asp-AMP and then transferred to the acceptor end of tRNA(Asp). This Shewanella halifaxensis (strain HAW-EB4) protein is Aspartate--tRNA ligase.